A 395-amino-acid chain; its full sequence is Galactokinase (395 aa).

Residue 39–42 (EHTD) participates in substrate binding. ATP is bound by residues Ser73 and 127 to 133 (GAGLSSS). Mg(2+) is bound by residues Ser133 and Glu165. Asp177 serves as the catalytic Proton acceptor. Tyr227 contacts substrate.

It belongs to the GHMP kinase family. GalK subfamily.

The protein resides in the cytoplasm. The enzyme catalyses alpha-D-galactose + ATP = alpha-D-galactose 1-phosphate + ADP + H(+). It functions in the pathway carbohydrate metabolism; galactose metabolism. Its function is as follows. Catalyzes the transfer of the gamma-phosphate of ATP to D-galactose to form alpha-D-galactose-1-phosphate (Gal-1-P). This chain is Galactokinase, found in Halalkalibacterium halodurans (strain ATCC BAA-125 / DSM 18197 / FERM 7344 / JCM 9153 / C-125) (Bacillus halodurans).